A 502-amino-acid chain; its full sequence is MDEGIEKNIFVNLESQIDGVCPKFYVNVDDIDIIHEPPEFYQRLKKLIKKAQKRIFLSTLYIGKEERELINCLSNALSNNPSLHVHILADQLRCTRESPGCCSASLLMQLKKKFPDRCEIKLYHTPNLRGLRKQLVPHRFNEGWGLQHMKIYGADDNLIISGANLSRDYFTNRKDRYYLFSDKGLADFFFKTHFLFSQLSFECIPHLSDSSIQLSSTSPVIPFTLKWNNSCPNPLTNPQEFRVAASAKIQQLLQGNREKFLSRNPSKPLSSVYGSELINQAGDDNNKPFHKYEESAIVYPLFQCVPILTSDVHSTEEKVLSIIGTLLSRKEVNWTLTAGYFNVYPALRKQLLKSEGIGEVIVASQQANGFYRSPGPSKLIPPAYQYIAEQFLKDSRKKKRNIDVLQWQNKGNTYHAKGFWLSTQHHKHPFLTTIGSSNYTSRSQQLDLESTLVVMTQNEKLKRKFSTEIELIKQHTKPMNTCQLEKVPMYVKALTSLMKKKL.

ATP is bound at residue 58–65 (STLYIGKE). PLD phosphodiesterase domains follow at residues 143–169 (GWGL…SRDY) and 410–443 (KGNT…TSRS). Residues His148, Lys150, and Asp155 contribute to the active site.

It belongs to the CDP-alcohol phosphatidyltransferase class-II family.

The protein localises to the mitochondrion. It catalyses the reaction a CDP-1,2-diacyl-sn-glycerol + sn-glycerol 3-phosphate = a 1,2-diacyl-sn-glycero-3-phospho-(1'-sn-glycero-3'-phosphate) + CMP + H(+). The protein operates within phospholipid metabolism; phosphatidylglycerol biosynthesis; phosphatidylglycerol from CDP-diacylglycerol: step 1/2. In terms of biological role, functions in the biosynthesis of the anionic phospholipids phosphatidylglycerol and cardiolipin. The protein is CDP-diacylglycerol--glycerol-3-phosphate 3-phosphatidyltransferase (pgs1) of Schizosaccharomyces pombe (strain 972 / ATCC 24843) (Fission yeast).